The following is a 588-amino-acid chain: MAEMGSKGVTAGKIASNVQKKLTRAQEKVLQKLGKADETKDEQFEQCVQNFNKQLTEGTRLQKDLRTYLASVKAMHEASKKLSECLQEVYEPEWPGRDEANKIAENNDLLWMDYHQKLVDQALLTMDTYLGQFPDIKSRIAKRGRKLVDYDSARHHYESLQTAKKKDEAKIAKPVSLLEKAAPQWCQGKLQAHLVAQTNLLRNQAEEELIKAQKVFEEMNVDLQEELPSLWNSRVGFYVNTFQSIAGLEENFHKEMSKLNQNLNDVLVSLEKQHGSNTFTVKAQPSDNAPEKGNKSPSPPPDGSPAATPEIRVNHEPEPASGASPGATIPKSPSQLRKGPPVPPPPKHTPSKEMKQEQILSLFDDAFVPEISVTTPSQFEAPGPFSEQASLLDLDFEPLPPVASPVKAPTPSGQSIPWDLWEPTESQAGILPSGEPSSAEGSFAVAWPSQTAEPGPAQPAEASEVVGGAQEPGETAASEATSSSLPAVVVETFSATVNGAVEGSAGTGRLDLPPGFMFKVQAQHDYTATDTDELQLKAGDVVLVIPFQNPEEQDEGWLMGVKESDWNQHKELEKCRGVFPENFTERVQ.

Alanine 2 is subject to N-acetylalanine. The segment at 2 to 122 is interaction with BIN2; that stretch reads AEMGSKGVTA…DYHQKLVDQA (121 aa). 2 coiled-coil regions span residues 15-42 and 193-274; these read ASNV…TKDE and HLVA…EKQH. The region spanning 29–276 is the BAR domain; sequence VLQKLGKADE…LVSLEKQHGS (248 aa). The segment at 279-355 is disordered; that stretch reads FTVKAQPSDN…PKHTPSKEMK (77 aa). Serine 296, serine 298, and serine 304 each carry phosphoserine. Position 308 is a phosphothreonine (threonine 308). Phosphoserine occurs at positions 324 and 332. The segment at 379-422 is clathrin-binding; sequence FEAPGPFSEQASLLDLDFEPLPPVASPVKAPTPSGQSIPWDLWE. A disordered region spans residues 448–484; the sequence is PSQTAEPGPAQPAEASEVVGGAQEPGETAASEATSSS. The span at 474 to 484 shows a compositional bias: low complexity; sequence ETAASEATSSS. An SH3 domain is found at 515-588; that stretch reads GFMFKVQAQH…FPENFTERVQ (74 aa).

Heterodimer with AMPH. Binds SH3GLB1. Interacts (via SH3 domain) with DNM1. Interacts with SYNJ1. Interacts (via SH3 domain) with DNM2. Interacts with CLTC. Interacts with AP2A2. Interacts with AP2B1. Interacts with MYC (via N-terminal transactivation domain); the interaction requires the integrity of the conserved MYC box regions 1 and 2. Interacts with BIN2. Interacts with SNX4. Interacts (via BAR domain) with BACE1. Binds (via BAR domain) F-actin. In terms of processing, phosphorylated by protein kinase C. Isoform 1 is expressed mainly in the brain. Isoform 2 is widely expressed.

The protein resides in the nucleus. The protein localises to the cytoplasm. It localises to the endosome. It is found in the cell membrane. Its subcellular location is the sarcolemma. The protein resides in the T-tubule. Functionally, is a key player in the control of plasma membrane curvature, and membrane shaping and remodeling. Required in muscle cells for the formation of T-tubules, tubular invaginations of the plasma membrane that function in depolarization-contraction coupling. Required in muscle cells for the formation of T-tubules, tubular invaginations of the plasma membrane that function in depolarization-contraction coupling. Is a negative regulator of endocytosis. Is also involved in the regulation of intracellular vesicles sorting, modulation of BACE1 trafficking and the control of amyloid-beta production. In neuronal circuits, endocytosis regulation may influence the internalization of PHF-tau aggregates. May be involved in the regulation of MYC activity and the control cell proliferation. The protein is Myc box-dependent-interacting protein 1 (Bin1) of Mus musculus (Mouse).